A 1162-amino-acid polypeptide reads, in one-letter code: PAN2-PAN3 deadenylation complex catalytic subunit PAN2 (1162 aa).

WD repeat units lie at residues 27-66, 153-193, 196-233, and 300-339; these read AKEKSATKMAFDQDVNLIWVGDTYGRVSSYDPSYSLYTRH, NTVQ…VVKT, GHSCMVSSMDFRDHTLVTAGKSKRFNMMYPDQFVNVYD, and HPCQSVTQLQLSPSGDYIAFIEHDNNINMWSRSNGMTGFT. A linker region spans residues 341 to 491; that stretch reads TATTILEYPD…LMNYKPSNDR (151 aa). The segment at 401-443 is disordered; sequence VPLPPKSSAASSSHTALSTSSDSRPNTARSGNPSSGGQKYRLL. Residues 407–423 show a composition bias toward low complexity; it reads SSAASSSHTALSTSSDS. The segment covering 424–437 has biased composition (polar residues); it reads RPNTARSGNPSSGG. Residues 492–904 form the USP domain; the sequence is EVPPAFTKLQ…TPEIAIYSDA (413 aa). One can recognise an Exonuclease domain in the interval 956-1126; it reads VALDAEFVAL…IEDAYTALVL (171 aa). Positions 959, 961, 1068, and 1119 each coordinate a divalent metal cation.

Belongs to the peptidase C19 family. PAN2 subfamily. In terms of assembly, forms a heterotrimer with an asymmetric homodimer of the regulatory subunit PAN3 to form the poly(A)-nuclease (PAN) deadenylation complex. Requires a divalent metal cation as cofactor.

It is found in the cytoplasm. The catalysed reaction is Exonucleolytic cleavage of poly(A) to 5'-AMP.. Positively regulated by the regulatory subunit PAN3. Functionally, catalytic subunit of the poly(A)-nuclease (PAN) deadenylation complex, one of two cytoplasmic mRNA deadenylases involved in mRNA turnover. PAN specifically shortens poly(A) tails of RNA and the activity is stimulated by poly(A)-binding protein PAB1. PAN deadenylation is followed by rapid degradation of the shortened mRNA tails by the CCR4-NOT complex. Deadenylated mRNAs are then degraded by two alternative mechanisms, namely exosome-mediated 3'-5' exonucleolytic degradation, or deadenylation-dependent mRNA decaping and subsequent 5'-3' exonucleolytic degradation by XRN1. May also be involved in post-transcriptional maturation of mRNA poly(A) tails. The polypeptide is PAN2-PAN3 deadenylation complex catalytic subunit PAN2 (Eremothecium gossypii (strain ATCC 10895 / CBS 109.51 / FGSC 9923 / NRRL Y-1056) (Yeast)).